We begin with the raw amino-acid sequence, 1202 residues long: DNA-directed RNA polymerase subunit beta (1202 aa).

This sequence belongs to the RNA polymerase beta chain family. The RNAP catalytic core consists of 2 alpha, 1 beta, 1 beta' and 1 omega subunit. When a sigma factor is associated with the core the holoenzyme is formed, which can initiate transcription.

The enzyme catalyses RNA(n) + a ribonucleoside 5'-triphosphate = RNA(n+1) + diphosphate. Functionally, DNA-dependent RNA polymerase catalyzes the transcription of DNA into RNA using the four ribonucleoside triphosphates as substrates. In Mycoplasmopsis synoviae (strain 53) (Mycoplasma synoviae), this protein is DNA-directed RNA polymerase subunit beta.